Here is a 257-residue protein sequence, read N- to C-terminus: Short-chain dehydrogenase reductase 3a (257 aa).

Residue 12–36 (IITGGASGIGAEAVRLFTDHGAKVV) coordinates NAD(+). Ser144 contributes to the substrate binding site. The active-site Proton acceptor is Tyr157.

The protein belongs to the short-chain dehydrogenases/reductases (SDR) family. In terms of tissue distribution, highly expressed in the radicle tip, lateral root primordia and tips, and the area surrounding the cotyledon hydathode of young seedlings.

Confers resistance to the incompatible pathogenic bacteria P.syringae pv. tomato DC3000 in a PR1-dependent manner. Seems not involved in abscisic acid (ABA) biosynthesis. The polypeptide is Short-chain dehydrogenase reductase 3a (SDR3a) (Arabidopsis thaliana (Mouse-ear cress)).